Reading from the N-terminus, the 492-residue chain is Octanoyltransferase (492 aa).

The tract at residues 1–255 is unknown; it reads MRCILLGSGT…GYDGLEAIID (255 aa). Positions 256–492 are lipB domain; that stretch reads EKGIRIKDFE…AVFRRNFGAL (237 aa). One can recognise a BPL/LPL catalytic domain in the interval 305–492; sequence RKPQNTLLFC…AVFRRNFGAL (188 aa). Residues 350–357, 423–425, and 436–438 contribute to the substrate site; these read RGGDITYH, AIG, and GFA. Cys454 functions as the Acyl-thioester intermediate in the catalytic mechanism.

In the C-terminal section; belongs to the LipB family.

It is found in the cytoplasm. It catalyses the reaction octanoyl-[ACP] + L-lysyl-[protein] = N(6)-octanoyl-L-lysyl-[protein] + holo-[ACP] + H(+). The protein operates within protein modification; protein lipoylation via endogenous pathway; protein N(6)-(lipoyl)lysine from octanoyl-[acyl-carrier-protein]: step 1/2. In terms of biological role, catalyzes the transfer of endogenously produced octanoic acid from octanoyl-acyl-carrier-protein onto the lipoyl domains of lipoate-dependent enzymes. Lipoyl-ACP can also act as a substrate although octanoyl-ACP is likely to be the physiological substrate. This Porphyromonas gingivalis (strain ATCC BAA-308 / W83) protein is Octanoyltransferase.